We begin with the raw amino-acid sequence, 542 residues long: MLO-like protein 7 (542 aa).

Residues 1–38 (MITRSRCRRSLLWFLVFHGGATATGAPSGGKELSQTPT) lie on the Extracellular side of the membrane. A helical transmembrane segment spans residues 39–59 (WAVAVVCTFLILISHLLEKGL). Residues 60 to 82 (QRLANWLWKKHKNSLLEALEKIK) lie on the Cytoplasmic side of the membrane. Residues 83–103 (AELMILGFISLLLTFGEPYIL) form a helical membrane-spanning segment. At 104 to 165 (KICVPRKAAL…ITLKGLHQLH (62 aa)) the chain is on the extracellular side. The chain crosses the membrane as a helical span at residues 166–186 (ILLFFLAIFHIVYSLITMMLS). Topologically, residues 187-288 (RLKIRGWKKW…IKRSLEDDFK (102 aa)) are cytoplasmic. The chain crosses the membrane as a helical span at residues 289–309 (LVVGISPVLWASFVIFLLFNV). Residues 310–315 (NGWRTL) lie on the Extracellular side of the membrane. A helical membrane pass occupies residues 316 to 336 (FWASIPPLLIILAVGTKLQAI). Over 337–374 (MATMALEIVETHAVVQGMPLVQGSDRYFWFDCPQLLLH) the chain is Cytoplasmic. A helical membrane pass occupies residues 375-395 (LIHFALFQNAFQITHFFWIWY). The Extracellular segment spans residues 396 to 414 (SFGLKSCFHKDFNLVVSKL). The chain crosses the membrane as a helical span at residues 415 to 435 (FLCLGALILCSYITLPLYALV). Topologically, residues 436–542 (TQMGSHMKKA…QQQEMQFHNS (107 aa)) are cytoplasmic. Residues 449–470 (EQMAKALKKWHKDIKLKKGKAR) are calmodulin-binding.

It belongs to the MLO family. As to expression, restricted to pollen, synergids, pistils and immature anthers. Also detected in seedlings, leaves, stems and inflorescens.

It localises to the cell membrane. The protein localises to the endomembrane system. In terms of biological role, may be involved in modulation of pathogen defense and leaf cell death. Activity seems to be regulated by Ca(2+)-dependent calmodulin binding and seems not to require heterotrimeric G proteins. Controls pollen tube reception in the female gametophyte synergids. This Arabidopsis thaliana (Mouse-ear cress) protein is MLO-like protein 7 (MLO7).